A 459-amino-acid chain; its full sequence is NADP-specific glutamate dehydrogenase (459 aa).

K114 is an active-site residue.

Belongs to the Glu/Leu/Phe/Val dehydrogenases family. In terms of assembly, homohexamer.

It carries out the reaction L-glutamate + NADP(+) + H2O = 2-oxoglutarate + NH4(+) + NADPH + H(+). The polypeptide is NADP-specific glutamate dehydrogenase (gdhA) (Emericella nidulans (strain FGSC A4 / ATCC 38163 / CBS 112.46 / NRRL 194 / M139) (Aspergillus nidulans)).